Reading from the N-terminus, the 160-residue chain is Ribosomal RNA large subunit methyltransferase H (160 aa).

Residues L76, G108, and 127–132 (FGFMTW) contribute to the S-adenosyl-L-methionine site.

Belongs to the RNA methyltransferase RlmH family. As to quaternary structure, homodimer.

The protein resides in the cytoplasm. The catalysed reaction is pseudouridine(1915) in 23S rRNA + S-adenosyl-L-methionine = N(3)-methylpseudouridine(1915) in 23S rRNA + S-adenosyl-L-homocysteine + H(+). In terms of biological role, specifically methylates the pseudouridine at position 1915 (m3Psi1915) in 23S rRNA. This is Ribosomal RNA large subunit methyltransferase H from Bartonella henselae (strain ATCC 49882 / DSM 28221 / CCUG 30454 / Houston 1) (Rochalimaea henselae).